The sequence spans 218 residues: Hypoxanthine-guanine phosphoribosyltransferase (218 aa).

Alanine 2 is modified (N-acetylalanine). A GMP-binding site is contributed by lysine 69. Position 103 is an N6-acetyllysine (lysine 103). Lysine 115 is covalently cross-linked (Glycyl lysine isopeptide (Lys-Gly) (interchain with G-Cter in SUMO1); alternate). Residue lysine 115 forms a Glycyl lysine isopeptide (Lys-Gly) (interchain with G-Cter in SUMO2); alternate linkage. GMP contacts are provided by residues 134–142, lysine 166, 186–188, and aspartate 194; these read EDIIDTGKT and KFV. Catalysis depends on aspartate 138, which acts as the Proton acceptor. At threonine 142 the chain carries Phosphothreonine. Mg(2+) is bound at residue aspartate 194.

The protein belongs to the purine/pyrimidine phosphoribosyltransferase family. In terms of assembly, homotetramer. It depends on Mg(2+) as a cofactor.

It is found in the cytoplasm. It carries out the reaction IMP + diphosphate = hypoxanthine + 5-phospho-alpha-D-ribose 1-diphosphate. The catalysed reaction is GMP + diphosphate = guanine + 5-phospho-alpha-D-ribose 1-diphosphate. Its pathway is purine metabolism; IMP biosynthesis via salvage pathway; IMP from hypoxanthine: step 1/1. Converts guanine to guanosine monophosphate, and hypoxanthine to inosine monophosphate. Transfers the 5-phosphoribosyl group from 5-phosphoribosylpyrophosphate onto the purine. Plays a central role in the generation of purine nucleotides through the purine salvage pathway. This chain is Hypoxanthine-guanine phosphoribosyltransferase (HPRT1), found in Bos taurus (Bovine).